The chain runs to 158 residues: Ribosome-binding factor A (158 aa).

Residues 127–158 form a disordered region; the sequence is RQGAVHAGDADPYKESAAEEPAAYEDDERRPD. Residues 134-143 show a composition bias toward basic and acidic residues; that stretch reads GDADPYKESA.

This sequence belongs to the RbfA family. Monomer. Binds 30S ribosomal subunits, but not 50S ribosomal subunits or 70S ribosomes.

The protein resides in the cytoplasm. In terms of biological role, one of several proteins that assist in the late maturation steps of the functional core of the 30S ribosomal subunit. Associates with free 30S ribosomal subunits (but not with 30S subunits that are part of 70S ribosomes or polysomes). Required for efficient processing of 16S rRNA. May interact with the 5'-terminal helix region of 16S rRNA. The polypeptide is Ribosome-binding factor A (Mycobacteroides abscessus (strain ATCC 19977 / DSM 44196 / CCUG 20993 / CIP 104536 / JCM 13569 / NCTC 13031 / TMC 1543 / L948) (Mycobacterium abscessus)).